Consider the following 429-residue polypeptide: Adenylosuccinate synthetase (429 aa).

GTP-binding positions include 12 to 18 (GDEGKGK) and 40 to 42 (GHT). Catalysis depends on aspartate 13, which acts as the Proton acceptor. 2 residues coordinate Mg(2+): aspartate 13 and glycine 40. Residues 13-16 (DEGK), 38-41 (NAGH), threonine 129, arginine 143, glutamine 224, threonine 239, and arginine 303 each bind IMP. Residue histidine 41 is the Proton donor of the active site. 299-305 (VTTGRAR) contacts substrate. GTP is bound by residues arginine 305, 331–333 (KLD), and 413–415 (GVG).

Belongs to the adenylosuccinate synthetase family. As to quaternary structure, homodimer. The cofactor is Mg(2+).

It is found in the cytoplasm. The enzyme catalyses IMP + L-aspartate + GTP = N(6)-(1,2-dicarboxyethyl)-AMP + GDP + phosphate + 2 H(+). Its pathway is purine metabolism; AMP biosynthesis via de novo pathway; AMP from IMP: step 1/2. Plays an important role in the de novo pathway of purine nucleotide biosynthesis. Catalyzes the first committed step in the biosynthesis of AMP from IMP. The sequence is that of Adenylosuccinate synthetase from Rhodococcus jostii (strain RHA1).